The chain runs to 105 residues: Met repressor (105 aa).

It belongs to the MetJ family. Homodimer.

It is found in the cytoplasm. Its function is as follows. This regulatory protein, when combined with SAM (S-adenosylmethionine) represses the expression of the methionine regulon and of enzymes involved in SAM synthesis. The chain is Met repressor from Actinobacillus pleuropneumoniae serotype 7 (strain AP76).